A 168-amino-acid polypeptide reads, in one-letter code: Cyclin-dependent kinase 4 inhibitor C (168 aa).

ANK repeat units lie at residues 4-33, 37-65, 69-98, and 102-132; these read PWGNELASAAARGDLEQLTSLLQNNVNVNA, FGRTALQVMKLGNPEIARRLLLRGANPDL, TGFAVIHDAARAGFLDTLQTLLEFQADVNI, and EGNLPLHLAAKEGHLRVVEFLVKHTASNVGH.

It belongs to the CDKN2 cyclin-dependent kinase inhibitor family. Heterodimer of p18 with CDK6. In terms of tissue distribution, highest levels found in skeletal muscle. Also found in pancreas and heart.

Functionally, interacts strongly with CDK6, weakly with CDK4. Inhibits cell growth and proliferation with a correlated dependence on endogenous retinoblastoma protein RB. The polypeptide is Cyclin-dependent kinase 4 inhibitor C (CDKN2C) (Homo sapiens (Human)).